The following is a 313-amino-acid chain: Biotin synthase (313 aa).

Residues 28–258 form the Radical SAM core domain; it reads NFGNDIELCS…LFPQARLRLS (231 aa). The [4Fe-4S] cluster site is built by Cys46, Cys50, and Cys53. The [2Fe-2S] cluster site is built by Cys90, Cys121, Cys181, and Arg256.

The protein belongs to the radical SAM superfamily. Biotin synthase family. In terms of assembly, homodimer. Requires [4Fe-4S] cluster as cofactor. [2Fe-2S] cluster serves as cofactor.

It carries out the reaction (4R,5S)-dethiobiotin + (sulfur carrier)-SH + 2 reduced [2Fe-2S]-[ferredoxin] + 2 S-adenosyl-L-methionine = (sulfur carrier)-H + biotin + 2 5'-deoxyadenosine + 2 L-methionine + 2 oxidized [2Fe-2S]-[ferredoxin]. It participates in cofactor biosynthesis; biotin biosynthesis; biotin from 7,8-diaminononanoate: step 2/2. In terms of biological role, catalyzes the conversion of dethiobiotin (DTB) to biotin by the insertion of a sulfur atom into dethiobiotin via a radical-based mechanism. The polypeptide is Biotin synthase (Francisella tularensis subsp. holarctica (strain FTNF002-00 / FTA)).